We begin with the raw amino-acid sequence, 619 residues long: DNA mismatch repair protein MutL (619 aa).

The protein belongs to the DNA mismatch repair MutL/HexB family.

In terms of biological role, this protein is involved in the repair of mismatches in DNA. It is required for dam-dependent methyl-directed DNA mismatch repair. May act as a 'molecular matchmaker', a protein that promotes the formation of a stable complex between two or more DNA-binding proteins in an ATP-dependent manner without itself being part of a final effector complex. The sequence is that of DNA mismatch repair protein MutL from Myxococcus xanthus (strain DK1622).